The primary structure comprises 435 residues: Gap junction alpha-3 protein (435 aa).

An intramembrane segment occupies glycine 2 to glutamine 15. The Cytoplasmic segment spans residues glutamate 16–threonine 19. Residues valine 20–alanine 40 traverse the membrane as a helical segment. Residues alanine 41 to proline 71 lie on the Extracellular side of the membrane. 3 disulfide bridges follow: cysteine 54–cysteine 192, cysteine 61–cysteine 186, and cysteine 65–cysteine 181. The helical transmembrane segment at isoleucine 72–tyrosine 92 threads the bilayer. The Cytoplasmic segment spans residues leucine 93–asparagine 152. Positions glutamate 108–serine 121 are enriched in basic and acidic residues. The tract at residues glutamate 108–arginine 136 is disordered. Residues isoleucine 153–phenylalanine 173 form a helical membrane-spanning segment. At glutamate 174–threonine 201 the chain is on the extracellular side. A helical transmembrane segment spans residues isoleucine 202–isoleucine 222. Residues tyrosine 223–isoleucine 435 lie on the Cytoplasmic side of the membrane. Residues alanine 332–isoleucine 435 form a disordered region. Low complexity-rich tracts occupy residues alanine 342–glycine 389 and glycine 415–arginine 427.

Belongs to the connexin family. Alpha-type (group II) subfamily. In terms of assembly, a hemichannel or connexon is composed of a hexamer of connexins. A functional gap junction is formed by the apposition of two hemichannels. Forms heteromeric channels with GJA8.

The protein resides in the cell membrane. Its subcellular location is the cell junction. It is found in the gap junction. Structural component of lens fiber gap junctions. Gap junctions are dodecameric channels that connect the cytoplasm of adjoining cells. They are formed by the docking of two hexameric hemichannels, one from each cell membrane. Small molecules and ions diffuse from one cell to a neighboring cell via the central pore. This is Gap junction alpha-3 protein (GJA3) from Homo sapiens (Human).